A 276-amino-acid polypeptide reads, in one-letter code: Shikimate dehydrogenase (NADP(+)) (276 aa).

Residues 19 to 21 (SKS) and Thr66 contribute to the shikimate site. The active-site Proton acceptor is Lys70. NADP(+) is bound at residue Asp82. Positions 91 and 107 each coordinate shikimate. Residues 133–137 (GAGGA), 157–162 (NRTRSR), and Leu222 each bind NADP(+). Tyr224 lines the shikimate pocket. Gly245 contributes to the NADP(+) binding site.

This sequence belongs to the shikimate dehydrogenase family. As to quaternary structure, homodimer.

It catalyses the reaction shikimate + NADP(+) = 3-dehydroshikimate + NADPH + H(+). It functions in the pathway metabolic intermediate biosynthesis; chorismate biosynthesis; chorismate from D-erythrose 4-phosphate and phosphoenolpyruvate: step 4/7. In terms of biological role, involved in the biosynthesis of the chorismate, which leads to the biosynthesis of aromatic amino acids. Catalyzes the reversible NADPH linked reduction of 3-dehydroshikimate (DHSA) to yield shikimate (SA). This Ruegeria sp. (strain TM1040) (Silicibacter sp.) protein is Shikimate dehydrogenase (NADP(+)).